The sequence spans 245 residues: Polyhedrin (245 aa).

Belongs to the polyhedrin family.

Functionally, major component of the virus occlusion bodies, which are large proteinaceous structures (polyhedra), that protect the virus from the outside environment for extended periods until they are ingested by insect larvae. This chain is Polyhedrin (PH), found in Orgyia pseudotsugata multicapsid polyhedrosis virus (OpMNPV).